We begin with the raw amino-acid sequence, 395 residues long: Flap endonuclease 1 (395 aa).

The tract at residues 1–104 (MGIKQLFQII…GELAKRFQRK (104 aa)) is N-domain. Aspartate 34 provides a ligand contact to Mg(2+). DNA contacts are provided by arginine 47 and arginine 70. The Mg(2+) site is built by aspartate 86, glutamate 158, glutamate 160, aspartate 179, and aspartate 181. An I-domain region spans residues 122–253 (DIEKFSRRTV…TTALKLIRDH (132 aa)). Residue glutamate 158 coordinates DNA. 2 residues coordinate DNA: glycine 231 and aspartate 233. Aspartate 233 serves as a coordination point for Mg(2+). An interaction with PCNA region spans residues 341 to 349 (QQARLEGFF). The segment at 344–395 (RLEGFFKPVPKTDAQKAAHKRKLEEKNEEKKKKLKQEKKDKAAAKSKPRGAA) is disordered. A compositionally biased stretch (basic and acidic residues) spans 365 to 386 (KLEEKNEEKKKKLKQEKKDKAA).

It belongs to the XPG/RAD2 endonuclease family. FEN1 subfamily. As to quaternary structure, interacts with PCNA. Three molecules of FEN1 bind to one PCNA trimer with each molecule binding to one PCNA monomer. PCNA stimulates the nuclease activity without altering cleavage specificity. Requires Mg(2+) as cofactor. Phosphorylated. Phosphorylation upon DNA damage induces relocalization to the nuclear plasma.

It localises to the nucleus. The protein resides in the nucleolus. It is found in the nucleoplasm. Its subcellular location is the mitochondrion. In terms of biological role, structure-specific nuclease with 5'-flap endonuclease and 5'-3' exonuclease activities involved in DNA replication and repair. During DNA replication, cleaves the 5'-overhanging flap structure that is generated by displacement synthesis when DNA polymerase encounters the 5'-end of a downstream Okazaki fragment. It enters the flap from the 5'-end and then tracks to cleave the flap base, leaving a nick for ligation. Also involved in the long patch base excision repair (LP-BER) pathway, by cleaving within the apurinic/apyrimidinic (AP) site-terminated flap. Acts as a genome stabilization factor that prevents flaps from equilibrating into structures that lead to duplications and deletions. Also possesses 5'-3' exonuclease activity on nicked or gapped double-stranded DNA, and exhibits RNase H activity. Also involved in replication and repair of rDNA and in repairing mitochondrial DNA. The sequence is that of Flap endonuclease 1 from Fusarium vanettenii (strain ATCC MYA-4622 / CBS 123669 / FGSC 9596 / NRRL 45880 / 77-13-4) (Fusarium solani subsp. pisi).